Reading from the N-terminus, the 29-residue chain is Galanin (29 aa).

The residue at position 29 (Ala29) is an Alanine amide.

It belongs to the galanin family.

The protein localises to the secreted. Its function is as follows. Contracts smooth muscle of the gastrointestinal and genitourinary tract, regulates growth hormone release, modulates insulin release, and may be involved in the control of adrenal secretion. The sequence is that of Galanin (GAL) from Ovis aries (Sheep).